The chain runs to 376 residues: Chaperone protein DnaJ (376 aa).

The J domain maps to 5–70 (DYYEVLGVAK…QKRAAYDQYG (66 aa)). The CR-type zinc finger occupies 136–214 (GYDTQIRVPS…CHGSGKVKET (79 aa)). 8 residues coordinate Zn(2+): cysteine 149, cysteine 152, cysteine 166, cysteine 169, cysteine 188, cysteine 191, cysteine 202, and cysteine 205. CXXCXGXG motif repeat units lie at residues 149-156 (CEVCHGSG), 166-173 (CPTCHGQG), 188-195 (CPKCHGTG), and 202-209 (CAHCHGSG).

Belongs to the DnaJ family. In terms of assembly, homodimer. Requires Zn(2+) as cofactor.

It localises to the cytoplasm. Its function is as follows. Participates actively in the response to hyperosmotic and heat shock by preventing the aggregation of stress-denatured proteins and by disaggregating proteins, also in an autonomous, DnaK-independent fashion. Unfolded proteins bind initially to DnaJ; upon interaction with the DnaJ-bound protein, DnaK hydrolyzes its bound ATP, resulting in the formation of a stable complex. GrpE releases ADP from DnaK; ATP binding to DnaK triggers the release of the substrate protein, thus completing the reaction cycle. Several rounds of ATP-dependent interactions between DnaJ, DnaK and GrpE are required for fully efficient folding. Also involved, together with DnaK and GrpE, in the DNA replication of plasmids through activation of initiation proteins. In Burkholderia multivorans (strain ATCC 17616 / 249), this protein is Chaperone protein DnaJ.